Reading from the N-terminus, the 261-residue chain is Eukaryotic translation initiation factor 3 subunit G (261 aa).

Positions 156-180 are disordered; it reads QDADSKNALGLRGDGRQMERNRSDE. The span at 168–180 shows a compositional bias: basic and acidic residues; it reads GDGRQMERNRSDE. Residues 181–259 enclose the RRM domain; it reads NTCRVTNLPQ…MVLKVEWTRP (79 aa).

It belongs to the eIF-3 subunit G family. In terms of assembly, component of the eukaryotic translation initiation factor 3 (eIF-3) complex.

The protein localises to the cytoplasm. RNA-binding component of the eukaryotic translation initiation factor 3 (eIF-3) complex, which is involved in protein synthesis of a specialized repertoire of mRNAs and, together with other initiation factors, stimulates binding of mRNA and methionyl-tRNAi to the 40S ribosome. The eIF-3 complex specifically targets and initiates translation of a subset of mRNAs involved in cell proliferation. This subunit can bind 18S rRNA. The sequence is that of Eukaryotic translation initiation factor 3 subunit G from Caenorhabditis briggsae.